Here is a 384-residue protein sequence, read N- to C-terminus: Putative D-galactosamine-6-phosphate deaminase AgaS (384 aa).

SIS domains are found at residues 45–197 and 215–364; these read LEPL…SQTF and SEGV…PDTP.

It belongs to the SIS family. AgaS subfamily.

It catalyses the reaction D-galactosamine 6-phosphate + H2O = D-tagatopyranose 1-phosphate + NH4(+). Catalyzes the isomerization-deamination of galactosamine 6-phosphate to form tagatofuranose 6-phosphate and ammonium ion. The protein is Putative D-galactosamine-6-phosphate deaminase AgaS (agaS) of Escherichia coli (strain K12).